The primary structure comprises 74 residues: MKNSSIILVLVFFFFISSSGEAKTCSDGWTCVGEDKCKVNCMAKHKGVGTCTLYIIPSFPAPITSYICDCMFDC.

A signal peptide spans 1 to 22; the sequence is MKNSSIILVLVFFFFISSSGEA. 4 cysteine pairs are disulfide-bonded: Cys-25/Cys-74, Cys-31/Cys-51, Cys-37/Cys-68, and Cys-41/Cys-70.

It belongs to the DEFL family.

The protein resides in the secreted. This is Putative defensin-like protein 186 (LCR40) from Arabidopsis thaliana (Mouse-ear cress).